We begin with the raw amino-acid sequence, 244 residues long: Probable transcriptional regulatory protein BT0025 (244 aa).

This sequence belongs to the TACO1 family.

The protein resides in the cytoplasm. In Borrelia turicatae (strain 91E135), this protein is Probable transcriptional regulatory protein BT0025.